We begin with the raw amino-acid sequence, 385 residues long: DnaJ homolog subfamily C member 28 (385 aa).

One can recognise a J domain in the interval 48 to 132; it reads EYYRLLNLDE…EGKFKYNTPQ (85 aa). A coiled-coil region spans residues 261–318; sequence KEIKDTIEQLREALLMSRKKLGNPLSPTEQKQWAQVCEQFQEKIRKLNKRINDFNLIV.

Its function is as follows. May have a role in protein folding or as a chaperone. This chain is DnaJ homolog subfamily C member 28 (Dnajc28), found in Mus musculus (Mouse).